Reading from the N-terminus, the 107-residue chain is HTH-type transcriptional regulator Rv2034 (107 aa).

In terms of domain architecture, HTH arsR-type spans 1 to 93 (MSTYRSPDRA…DLDRFWTRAL (93 aa)). The H-T-H motif DNA-binding region spans 33–56 (VGELARDLPVSRPAVSQHLKVLKT).

Homodimer.

DNA-binding ability is not susceptible to zinc, nickel, cobalt, cadmium, lead, copper and manganese ions. Involved in the regulation of lipid metabolism and hypoxic response. Positively regulates transcription of various genes, such as phoP, groEL2 and dosR. Negatively regulates its own transcription. Acts by binding to a specific palindromic sequence motif in promoter regions. This is HTH-type transcriptional regulator Rv2034 from Mycobacterium tuberculosis (strain ATCC 25618 / H37Rv).